The primary structure comprises 212 residues: GTP cyclohydrolase 1 (212 aa).

3 residues coordinate Zn(2+): Cys-103, His-106, and Cys-174.

The protein belongs to the GTP cyclohydrolase I family. Toroid-shaped homodecamer, composed of two pentamers of five dimers.

The enzyme catalyses GTP + H2O = 7,8-dihydroneopterin 3'-triphosphate + formate + H(+). Its pathway is cofactor biosynthesis; 7,8-dihydroneopterin triphosphate biosynthesis; 7,8-dihydroneopterin triphosphate from GTP: step 1/1. This is GTP cyclohydrolase 1 from Caulobacter vibrioides (strain ATCC 19089 / CIP 103742 / CB 15) (Caulobacter crescentus).